Reading from the N-terminus, the 617-residue chain is Vacuolar protein sorting-associated protein 33B (617 aa).

Position 2 is an N-acetylalanine (A2).

It belongs to the STXBP/unc-18/SEC1 family. As to quaternary structure, interacts with RAB11A and VIPAS39. Associates with adapter protein complex 3 (AP-3), clathrin:AP-3 and clathrin:HGS complexes. Phosphorylated on tyrosine residues.

It localises to the late endosome membrane. The protein localises to the lysosome membrane. Its subcellular location is the early endosome. It is found in the cytoplasmic vesicle. The protein resides in the clathrin-coated vesicle. It localises to the recycling endosome. Its function is as follows. May play a role in vesicle-mediated protein trafficking to lysosomal compartments and in membrane docking/fusion reactions of late endosomes/lysosomes. Required for proper trafficking and targeting of the collagen-modifying enzyme lysyl hydroxylase 3 (LH3) to intracellular collagen. Mediates phagolysosomal fusion in macrophages. Proposed to be involved in endosomal maturation implicating in part VIPAS39. In epithelial cells, the VPS33B:VIPAS39 complex may play a role in the apical RAB11A-dependentrecycling pathway and in the maintenance of the apical-basolateral polarity. Seems to be involved in the sorting of specific cargos from the trans-Golgi network to alpha-granule-destined multivesicular bodies (MVBs) promoting MVBs maturation in megakaryocytes. The protein is Vacuolar protein sorting-associated protein 33B (Vps33b) of Mus musculus (Mouse).